The following is a 316-amino-acid chain: Cuticle collagen 7 (316 aa).

The signal sequence occupies residues Met1–Ser34. Disordered stretches follow at residues Lys78–Tyr269 and His281–Ala316. Residues Gln79–Asn90 are compositionally biased toward polar residues. Triple-helical region stretches follow at residues Gly94–Ser126, Gly139–Ser198, and Gly204–Pro263. Composition is skewed to low complexity over residues Gln110 to Pro125, Pro137 to Pro147, and Ala177 to Ser198. Positions Ser209 to Pro221 are enriched in pro residues. Residues Pro241 to Asp260 show a composition bias toward low complexity.

Belongs to the cuticular collagen family. In terms of assembly, collagen polypeptide chains are complexed within the cuticle by disulfide bonds and other types of covalent cross-links.

Its function is as follows. Nematode cuticles are composed largely of collagen-like proteins. The cuticle functions both as an exoskeleton and as a barrier to protect the worm from its environment. This is Cuticle collagen 7 (col-7) from Caenorhabditis elegans.